Here is a 35-residue protein sequence, read N- to C-terminus: Cycloamanide F proprotein (35 aa).

A propeptide spanning residues 1–10 (MSDINATRLP) is cleaved from the precursor. A cross-link (cyclopeptide (Ile-Pro)) is located at residues 11–18 (IVGILGLP). A propeptide spanning residues 19–35 (CIGDDVNSTLTHGEDLC) is cleaved from the precursor.

This sequence belongs to the MSDIN fungal toxin family. Post-translationally, processed by the macrocyclase-peptidase enzyme POPB to yield a cyclic decapeptide. POPB first removes 10 residues from the N-terminus. Conformational trapping of the remaining peptide forces the enzyme to release this intermediate rather than proceed to macrocyclization. The enzyme rebinds the remaining peptide in a different conformation and catalyzes macrocyclization of the N-terminal 8 residues.

In terms of biological role, cyclic octapeptide that belongs to the MSDIN-like toxin family responsible for a large number of food poisoning cases and deaths. Cycloaminide E is structurally related to other cycloamanides that are non-toxic to mammals but show immunosuppressive activity. This is Cycloamanide F proprotein from Amanita phalloides (Death cap).